The sequence spans 481 residues: ATP synthase subunit alpha (481 aa).

Position 145–152 (145–152 (GDRQTGKT)) interacts with ATP.

This sequence belongs to the ATPase alpha/beta chains family. F-type ATPases have 2 components, CF(1) - the catalytic core - and CF(0) - the membrane proton channel. CF(1) has five subunits: alpha(3), beta(3), gamma(1), delta(1), epsilon(1). CF(0) has three main subunits: a(1), b(2) and c(9-12). The alpha and beta chains form an alternating ring which encloses part of the gamma chain. CF(1) is attached to CF(0) by a central stalk formed by the gamma and epsilon chains, while a peripheral stalk is formed by the delta and b chains.

The protein localises to the cell membrane. The catalysed reaction is ATP + H2O + 4 H(+)(in) = ADP + phosphate + 5 H(+)(out). In terms of biological role, produces ATP from ADP in the presence of a proton gradient across the membrane. The alpha chain is a regulatory subunit. In Carsonella ruddii (strain PV), this protein is ATP synthase subunit alpha.